The following is an 863-amino-acid chain: Dynamin-3 (863 aa).

The region spanning 28–294 (LLELPQIAVV…LTNHIRDTLP (267 aa)) is the Dynamin-type G domain. The G1 motif stretch occupies residues 38–45 (GGQSAGKS). 38–46 (GGQSAGKSS) contributes to the GTP binding site. The segment at 64-66 (VTR) is G2 motif. Positions 136 to 139 (DLPG) are G3 motif. Residues 205 to 208 (TKLD) are G4 motif. 205 to 211 (TKLDLMD) provides a ligand contact to GTP. At tyrosine 231 the chain carries Phosphotyrosine. Residues 235-238 (VNRS) are G5 motif. Residue 236 to 239 (NRSQ) coordinates GTP. At lysine 299 the chain carries N6-acetyllysine. Residues 515–621 (QVIRKGWLTV…WKASLLRAGV (107 aa)) enclose the PH domain. Tyrosine 593 carries the post-translational modification Phosphotyrosine. Lysine 594 carries the post-translational modification N6-acetyllysine. 2 disordered regions span residues 626–647 (SVGS…SMDP) and 742–863 (ATVS…SLLD). Over residues 627–642 (VGSNKTENDENGQAEN) the composition is skewed to polar residues. One can recognise a GED domain in the interval 653–744 (VETIRNLVDS…IIGDINTATV (92 aa)). Phosphoserine is present on residues serine 763 and serine 767. Composition is skewed to pro residues over residues 791-816 (PAIP…PPFP) and 826-849 (PQVP…PSPT). Serine 847 carries the post-translational modification Phosphoserine.

It belongs to the TRAFAC class dynamin-like GTPase superfamily. Dynamin/Fzo/YdjA family.

The protein localises to the cytoplasm. It is found in the cytoskeleton. The enzyme catalyses GTP + H2O = GDP + phosphate + H(+). Functionally, microtubule-associated force-producing protein involved in producing microtubule bundles and able to bind and hydrolyze GTP. Most probably involved in vesicular trafficking processes, in particular endocytosis. This chain is Dynamin-3 (Dnm3), found in Mus musculus (Mouse).